The following is a 595-amino-acid chain: Elongation factor 4 (595 aa).

The region spanning 2 to 183 is the tr-type G domain; the sequence is KNIRNFCIIA…AIIERISPPT (182 aa). GTP contacts are provided by residues 14 to 19 and 130 to 133; these read DHGKST and NKID.

It belongs to the TRAFAC class translation factor GTPase superfamily. Classic translation factor GTPase family. LepA subfamily.

The protein resides in the cell inner membrane. It catalyses the reaction GTP + H2O = GDP + phosphate + H(+). Functionally, required for accurate and efficient protein synthesis under certain stress conditions. May act as a fidelity factor of the translation reaction, by catalyzing a one-codon backward translocation of tRNAs on improperly translocated ribosomes. Back-translocation proceeds from a post-translocation (POST) complex to a pre-translocation (PRE) complex, thus giving elongation factor G a second chance to translocate the tRNAs correctly. Binds to ribosomes in a GTP-dependent manner. The polypeptide is Elongation factor 4 (Amoebophilus asiaticus (strain 5a2)).